Consider the following 257-residue polypeptide: Imidazole glycerol phosphate synthase subunit HisF (257 aa).

Catalysis depends on residues D11 and D130.

Belongs to the HisA/HisF family. In terms of assembly, heterodimer of HisH and HisF.

The protein resides in the cytoplasm. It catalyses the reaction 5-[(5-phospho-1-deoxy-D-ribulos-1-ylimino)methylamino]-1-(5-phospho-beta-D-ribosyl)imidazole-4-carboxamide + L-glutamine = D-erythro-1-(imidazol-4-yl)glycerol 3-phosphate + 5-amino-1-(5-phospho-beta-D-ribosyl)imidazole-4-carboxamide + L-glutamate + H(+). It participates in amino-acid biosynthesis; L-histidine biosynthesis; L-histidine from 5-phospho-alpha-D-ribose 1-diphosphate: step 5/9. In terms of biological role, IGPS catalyzes the conversion of PRFAR and glutamine to IGP, AICAR and glutamate. The HisF subunit catalyzes the cyclization activity that produces IGP and AICAR from PRFAR using the ammonia provided by the HisH subunit. This chain is Imidazole glycerol phosphate synthase subunit HisF, found in Francisella philomiragia subsp. philomiragia (strain ATCC 25017 / CCUG 19701 / FSC 153 / O#319-036).